A 227-amino-acid chain; its full sequence is uncharacterized protein (227 aa).

The protein resides in the virion. This is an uncharacterized protein from Acanthamoeba polyphaga (Amoeba).